A 1304-amino-acid polypeptide reads, in one-letter code: DNA-directed RNA polymerase subunit beta' (1304 aa).

The interval methionine 1–alanine 23 is disordered. Zn(2+) is bound by residues cysteine 241, cysteine 315, cysteine 322, and cysteine 325. Residues alanine 1256–proline 1268 show a composition bias toward acidic residues. Positions alanine 1256 to glutamate 1304 are disordered. Low complexity predominate over residues alanine 1269–leucine 1278. Over residues aspartate 1294–glutamate 1304 the composition is skewed to acidic residues.

This sequence belongs to the RNA polymerase beta' chain family. RpoC2 subfamily. As to quaternary structure, in cyanobacteria the RNAP catalytic core is composed of 2 alpha, 1 beta, 1 beta', 1 gamma and 1 omega subunit. When a sigma factor is associated with the core the holoenzyme is formed, which can initiate transcription. It depends on Zn(2+) as a cofactor.

The catalysed reaction is RNA(n) + a ribonucleoside 5'-triphosphate = RNA(n+1) + diphosphate. DNA-dependent RNA polymerase catalyzes the transcription of DNA into RNA using the four ribonucleoside triphosphates as substrates. This chain is DNA-directed RNA polymerase subunit beta', found in Synechococcus sp. (strain JA-2-3B'a(2-13)) (Cyanobacteria bacterium Yellowstone B-Prime).